The chain runs to 454 residues: MSHNDTIVAQATPPGRGGVGILRISGLKARDVAQEVLGKLPKPRYADYLPFKDVDGSALDQGIALWFPGPNSFTGEDVLELQGHGGPVILDLLLKRILTLPGVRIARPGEFSERAFLNDKLDLAQAEAIADLIDASSEQAARSALNSLQGAFSARVNHLVEALTHLRIYVEAAIDFPDEEIDFLSDGKIEAQLNGVIADLDAVRTEARQGSLLREGMKVVIAGRPNAGKSSLLNALAGREAAIVTDIAGTTRDVLREHIHIDGMPLHIIDTAGLRDANDEVERIGIERAWQEIEQADRVLFMVDGTTTDAVDPADIWPDFIARLPKNLPITVVRNKADITGETLGISEVNGHSLVRLSARTGEGVDVLRNNLKQSMGFETNMEGGFLARRRHLQALAEAANHLEQGKAQLLGAWAGELLAEELRLAQQSLSEITGEFTSDDLLGRIFSSFCIGK.

Arginine 23, glutamate 80, and lysine 120 together coordinate (6S)-5-formyl-5,6,7,8-tetrahydrofolate. The TrmE-type G domain maps to 216 to 377; sequence GMKVVIAGRP…LRNNLKQSMG (162 aa). Residue asparagine 226 participates in K(+) binding. GTP-binding positions include 226-231, 245-251, 270-273, 335-338, and 358-360; these read NAGKSS, TDIAGTT, DTAG, NKAD, and SAR. Position 230 (serine 230) interacts with Mg(2+). K(+) contacts are provided by threonine 245, isoleucine 247, and threonine 250. Threonine 251 contributes to the Mg(2+) binding site. Position 454 (lysine 454) interacts with (6S)-5-formyl-5,6,7,8-tetrahydrofolate.

Belongs to the TRAFAC class TrmE-Era-EngA-EngB-Septin-like GTPase superfamily. TrmE GTPase family. Homodimer. Heterotetramer of two MnmE and two MnmG subunits. It depends on K(+) as a cofactor.

The protein localises to the cytoplasm. Its function is as follows. Exhibits a very high intrinsic GTPase hydrolysis rate. Involved in the addition of a carboxymethylaminomethyl (cmnm) group at the wobble position (U34) of certain tRNAs, forming tRNA-cmnm(5)s(2)U34. The protein is tRNA modification GTPase MnmE of Salmonella paratyphi A (strain AKU_12601).